The following is a 296-amino-acid chain: AUGMIN subunit 2 (296 aa).

2 coiled-coil regions span residues 56-83 (DDLI…QGRK) and 253-285 (AVHK…NRRL). Residues 218 to 296 (AVSLPTTPGG…WPPSVKKSSV (79 aa)) are disordered. Acidic residues predominate over residues 264-277 (QNEEEEEEEEEEDG).

The protein belongs to the HAUS2 family. Part of the augmin complex composed of 8 subunits. The complex acts on microtubules and interacts with gamma-tubulin in spindles and the phragmoplast.

In terms of biological role, contributes to the assembly of the acentrosomal spindle and phragmoplast microtubule arrays as part of the augmin complex. The chain is AUGMIN subunit 2 from Arabidopsis thaliana (Mouse-ear cress).